Consider the following 504-residue polypeptide: ATP synthase subunit alpha (504 aa).

ATP is bound at residue 169–176 (GDRGTGKT).

It belongs to the ATPase alpha/beta chains family. In terms of assembly, F-type ATPases have 2 components, CF(1) - the catalytic core - and CF(0) - the membrane proton channel. CF(1) has five subunits: alpha(3), beta(3), gamma(1), delta(1), epsilon(1). CF(0) has three main subunits: a(1), b(2) and c(9-12). The alpha and beta chains form an alternating ring which encloses part of the gamma chain. CF(1) is attached to CF(0) by a central stalk formed by the gamma and epsilon chains, while a peripheral stalk is formed by the delta and b chains.

It is found in the cell inner membrane. The catalysed reaction is ATP + H2O + 4 H(+)(in) = ADP + phosphate + 5 H(+)(out). Produces ATP from ADP in the presence of a proton gradient across the membrane. The alpha chain is a regulatory subunit. This is ATP synthase subunit alpha from Leptospira biflexa serovar Patoc (strain Patoc 1 / Ames).